A 380-amino-acid chain; its full sequence is Homoserine O-succinyltransferase (380 aa).

The AB hydrolase-1 domain occupies 49–357 (NAILICHALS…ESTHGHDAFL (309 aa)). Serine 155 (nucleophile) is an active-site residue. Substrate is bound at residue arginine 225. Active-site residues include aspartate 320 and histidine 353. Aspartate 354 is a binding site for substrate.

It belongs to the AB hydrolase superfamily. MetX family. As to quaternary structure, homodimer.

Its subcellular location is the cytoplasm. The enzyme catalyses L-homoserine + succinyl-CoA = O-succinyl-L-homoserine + CoA. It functions in the pathway amino-acid biosynthesis; L-methionine biosynthesis via de novo pathway; O-succinyl-L-homoserine from L-homoserine: step 1/1. In terms of biological role, transfers a succinyl group from succinyl-CoA to L-homoserine, forming succinyl-L-homoserine. The sequence is that of Homoserine O-succinyltransferase from Laribacter hongkongensis (strain HLHK9).